We begin with the raw amino-acid sequence, 873 residues long: Tyrosine-protein kinase transforming protein Fps (873 aa).

Residues 1-46 are disordered; that stretch reads ASGQLHRPQPQEHTSTSAAAGTWRLTQASESRHRLPHCSAAPSHQD. Over residues 11–29 the composition is skewed to polar residues; that stretch reads QEHTSTSAAAGTWRLTQAS. Positions 50-313 constitute an F-BAR domain; that stretch reads MGFGPELWCP…AVEMIDPATE (264 aa). The disordered stretch occupies residues 445 to 471; that stretch reads GSEEPPPALPLQEDRQSARSTDQERSG. A compositionally biased stretch (basic and acidic residues) spans 456-469; the sequence is QEDRQSARSTDQER. Residues 511-600 form the SH2 domain; the sequence is WYHGAIPRSE…KSGIVLTRAV (90 aa). The Protein kinase domain occupies 612 to 865; the sequence is VLLGERIGRG…PSFGAVHQDL (254 aa). Residues 618-626 and lysine 641 each bind ATP; that span reads IGRGNFGEV. The active-site Proton acceptor is aspartate 734. The residue at position 764 (tyrosine 764) is a Phosphotyrosine; by autocatalysis.

It belongs to the protein kinase superfamily. Tyr protein kinase family. Fes/fps subfamily.

The catalysed reaction is L-tyrosyl-[protein] + ATP = O-phospho-L-tyrosyl-[protein] + ADP + H(+). The protein is Tyrosine-protein kinase transforming protein Fps (V-FPS) of Gallus gallus (Chicken).